The sequence spans 166 residues: Disulfide bond reductase DsbH (166 aa).

The first 22 residues, 1–22, serve as a signal peptide directing secretion; that stretch reads MKFWLQGCAFVGCLLLTLPCCA. Positions 32–166 constitute a Thioredoxin domain; it reads LQQTRPIAAA…SKVKSALKLR (135 aa). Cysteines 72 and 75 form a disulfide. 73–74 is a substrate binding site; that stretch reads MW.

As to quaternary structure, monomer.

Its subcellular location is the periplasm. Its function is as follows. Catalyzes the reduction of disulfide bonds. May function in reducing intermolecular disulfides between proteins and small molecules in the periplasm, or keeping a specific subset of periplasmic proteins reduced, or maintaining the periplasm of Chlamydia in a generally reducing state. Seems to be unable to oxidize thiols into disulfides and does not display disulfide bond isomerase activity. The chain is Disulfide bond reductase DsbH (dsbH) from Chlamydia pneumoniae (Chlamydophila pneumoniae).